The following is a 988-amino-acid chain: Exportin-T (988 aa).

Belongs to the exportin family.

Its subcellular location is the nucleus. The protein resides in the cytoplasm. TRNA nucleus export receptor which facilitates tRNA translocation across the nuclear pore complex. Involved in pre-tRNA splicing, probably by affecting the interaction of pre-tRNA with splicing endonuclease. The chain is Exportin-T (LOS1) from Lodderomyces elongisporus (strain ATCC 11503 / CBS 2605 / JCM 1781 / NBRC 1676 / NRRL YB-4239) (Yeast).